The following is a 582-amino-acid chain: TRAF-type zinc finger domain-containing protein 1 (582 aa).

Position 2 is an N-acetylalanine (Ala-2). A TRAF-type zinc finger spans residues 27–103 (IHEIHCQRNI…DLELSILKLK (77 aa)). Ser-191 carries the post-translational modification Phosphoserine. Positions 217–236 (EQERQERNRGQQPPKEGGEE) are disordered. 8 positions are modified to phosphoserine: Ser-278, Ser-320, Ser-326, Ser-327, Ser-409, Ser-415, Ser-430, and Ser-470. Residues 401-582 (TEGIPRLDSQ…AGDAEEEEEE (182 aa)) form a disordered region. 2 stretches are compositionally biased toward polar residues: residues 454 to 471 (PINN…STSG) and 486 to 495 (LSNSDSQDIQ).

In terms of assembly, interacts with MAVS, TICAM1, TRAF1, TRAF2, TRAF3. Interacts with TRAF6.

Its function is as follows. Negative feedback regulator that controls excessive innate immune responses. Regulates both Toll-like receptor 4 (TLR4) and DDX58/RIG1-like helicases (RLH) pathways. May inhibit the LTR pathway by direct interaction with TRAF6 and attenuation of NF-kappa-B activation. May negatively regulate the RLH pathway downstream from MAVS and upstream of NF-kappa-B and IRF3. The sequence is that of TRAF-type zinc finger domain-containing protein 1 (TRAFD1) from Homo sapiens (Human).